Reading from the N-terminus, the 299-residue chain is Mimecan (299 aa).

The first 19 residues, M1–P19, serve as a signal peptide directing secretion. The N-linked (GlcNAc...) (keratan sulfate) asparagine glycan is linked to N89. 7 LRR repeats span residues D113–I132, K133–I156, E157–L180, L181–I200, K201–L226, E227–I247, and T248–V278. The N-linked (GlcNAc...) (keratan sulfate) asparagine glycan is linked to N215. An N-linked (GlcNAc...) asparagine glycan is attached at N246. C256 and C289 are disulfide-bonded. Residue N259 is glycosylated (N-linked (GlcNAc...) (keratan sulfate) asparagine).

Belongs to the small leucine-rich proteoglycan (SLRP) family. SLRP class III subfamily. In terms of processing, contains keratan sulfate. Keratan sulfate attachment is observed in the cornea but the protein also exists in other tissues without keratan sulfate. Post-translationally, the 12 kDa OIF in bone and the 25 kDa KSPG25 protein in cornea are probably proteolytic fragments. Bone and cornea.

The protein localises to the secreted. It is found in the extracellular space. Its subcellular location is the extracellular matrix. Functionally, induces bone formation in conjunction with TGF-beta-1 or TGF-beta-2. The chain is Mimecan (OGN) from Bos taurus (Bovine).